The chain runs to 116 residues: Translation initiation factor 1A (116 aa).

Positions 1 to 25 (MRCLSKKHQKQGDEHGGEIPLPNPD) are disordered. Residues 17 to 91 (GEIPLPNPDE…EKGEVVYKYG (75 aa)) form the S1-like domain.

This sequence belongs to the eIF-1A family.

Its function is as follows. Seems to be required for maximal rate of protein biosynthesis. Enhances ribosome dissociation into subunits and stabilizes the binding of the initiator Met-tRNA(I) to 40 S ribosomal subunits. This chain is Translation initiation factor 1A (eIF1A), found in Desulfurococcus amylolyticus (strain DSM 18924 / JCM 16383 / VKM B-2413 / 1221n) (Desulfurococcus kamchatkensis).